We begin with the raw amino-acid sequence, 97 residues long: Sperm-associated acrosin inhibitor (97 aa).

An N-terminal signal peptide occupies residues 1–26 (MAFFSSRVRALFILVLVLPLCSETGF). The 59-residue stretch at 32–90 (TRKEPDCDVYRSHLFFCTREMDPICGTNGKSYANPCIFCSEKLGRNEKFDFGHWGHCRE) folds into the Kazal-like domain. 3 disulfides stabilise this stretch: cysteine 38-cysteine 70, cysteine 48-cysteine 67, and cysteine 56-cysteine 88.

As to expression, seminal plasma.

It is found in the secreted. Inhibits acrosin. In Sus scrofa (Pig), this protein is Sperm-associated acrosin inhibitor.